The primary structure comprises 249 residues: Polyhedrin (249 aa).

It belongs to the polyhedrin family.

Functionally, major component of the virus occlusion bodies, which are large proteinaceous structures (polyhedra), that protect the virus from the outside environment for extended periods until they are ingested by insect larvae. In Lepidoptera (butterflies and moths), this protein is Polyhedrin (PH).